The chain runs to 294 residues: 4-hydroxy-tetrahydrodipicolinate synthase (294 aa).

Threonine 45 is a pyruvate binding site. The Proton donor/acceptor role is filled by tyrosine 133. The Schiff-base intermediate with substrate role is filled by lysine 162. Isoleucine 204 contacts pyruvate.

The protein belongs to the DapA family. In terms of assembly, homotetramer; dimer of dimers.

Its subcellular location is the cytoplasm. It catalyses the reaction L-aspartate 4-semialdehyde + pyruvate = (2S,4S)-4-hydroxy-2,3,4,5-tetrahydrodipicolinate + H2O + H(+). The protein operates within amino-acid biosynthesis; L-lysine biosynthesis via DAP pathway; (S)-tetrahydrodipicolinate from L-aspartate: step 3/4. Its function is as follows. Catalyzes the condensation of (S)-aspartate-beta-semialdehyde [(S)-ASA] and pyruvate to 4-hydroxy-tetrahydrodipicolinate (HTPA). The polypeptide is 4-hydroxy-tetrahydrodipicolinate synthase (Bartonella tribocorum (strain CIP 105476 / IBS 506)).